The sequence spans 369 residues: Melanoma-associated antigen 10 (369 aa).

Residues 1–131 are disordered; the sequence is MPRAPKRQRC…VLPDSESLPR (131 aa). Over residues 39-62 the composition is skewed to low complexity; it reads SSSTSTSSSFPSSFPSSSSSSSSS. Polar residues-rich tracts occupy residues 85 to 96 and 107 to 121; these read QSAQIACSSPSV and EGSS…STLQ. Residues 134–333 enclose the MAGE domain; that stretch reads IDEKVTDLVQ…RSFPLWYEEA (200 aa). Positions 340-369 are disordered; it reads RAQDRIATTDDTTAMASASSSATGSFSYPE. The segment covering 348–369 has biased composition (low complexity); the sequence is TDDTTAMASASSSATGSFSYPE.

As to expression, expressed in many tumors of several types, such as melanoma, head and neck squamous cell carcinoma, lung carcinoma and breast carcinoma, but not in normal tissues except for spermatogonia, spermatocytes and placenta.

It localises to the nucleus. Its function is as follows. Not known, though may play a role in embryonal development and tumor transformation or aspects of tumor progression. This Homo sapiens (Human) protein is Melanoma-associated antigen 10 (MAGEA10).